The sequence spans 427 residues: Large ribosomal subunit protein uL4 (427 aa).

Ala2 carries the N-acetylalanine modification. An N6-acetyllysine modification is found at Lys14. Arg97 carries the omega-N-methylarginine modification. At Lys106 the chain carries N6-acetyllysine. Residue Lys239 forms a Glycyl lysine isopeptide (Lys-Gly) (interchain with G-Cter in SUMO2) linkage. Lys259 is modified (N6-acetyllysine). Thr266 bears the Phosphothreonine mark. Residues Ser290 and Ser295 each carry the phosphoserine modification. Arg300 carries the citrulline modification. Lys327 participates in a covalent cross-link: Glycyl lysine isopeptide (Lys-Gly) (interchain with G-Cter in SUMO2). Residues Lys333 and Lys353 each carry the N6-acetyllysine modification. Residue Lys364 is modified to N6-acetyllysine; alternate. Lys364 participates in a covalent cross-link: Glycyl lysine isopeptide (Lys-Gly) (interchain with G-Cter in SUMO1); alternate. At Ser365 the chain carries Phosphoserine. Positions 369-427 (AAVAGKKPVVGKKGKKVAVGVKKQKKPLVGKKAAATKKPAPEKKSTEKKPTTEEKKPAA) are disordered. Basic residues predominate over residues 377 to 397 (VVGKKGKKVAVGVKKQKKPLV). Over residues 407-427 (PAPEKKSTEKKPTTEEKKPAA) the composition is skewed to basic and acidic residues.

It belongs to the universal ribosomal protein uL4 family. Component of the large ribosomal subunit. May bind IPO9 with low affinity. Interacts with RBM3. In terms of processing, citrullinated by PADI4.

It localises to the cytoplasm. Functionally, component of the large ribosomal subunit. The ribosome is a large ribonucleoprotein complex responsible for the synthesis of proteins in the cell. The chain is Large ribosomal subunit protein uL4 (RPL4) from Macaca fascicularis (Crab-eating macaque).